Consider the following 25-residue polypeptide: MRDKWRKKRVRRLKRKRRKVRARSK.

The disordered stretch occupies residues 1–25 (MRDKWRKKRVRRLKRKRRKVRARSK).

It belongs to the eukaryotic ribosomal protein eS32 family. In terms of assembly, component of the small ribosomal subunit. Mature ribosomes consist of a small (40S) and a large (60S) subunit. The 40S subunit contains about 32 different proteins and 1 molecule of RNA (18S). The 60S subunit contains 45 different proteins and 3 molecules of RNA (25S, 5.8S and 5S).

It localises to the cytoplasm. In terms of biological role, component of the ribosome, a large ribonucleoprotein complex responsible for the synthesis of proteins in the cell. The small ribosomal subunit (SSU) binds messenger RNAs (mRNAs) and translates the encoded message by selecting cognate aminoacyl-transfer RNA (tRNA) molecules. The large subunit (LSU) contains the ribosomal catalytic site termed the peptidyl transferase center (PTC), which catalyzes the formation of peptide bonds, thereby polymerizing the amino acids delivered by tRNAs into a polypeptide chain. The nascent polypeptides leave the ribosome through a tunnel in the LSU and interact with protein factors that function in enzymatic processing, targeting, and the membrane insertion of nascent chains at the exit of the ribosomal tunnel. The chain is Small ribosomal subunit protein eS32 from Candida albicans (strain SC5314 / ATCC MYA-2876) (Yeast).